A 492-amino-acid chain; its full sequence is Cysteine--tRNA ligase (492 aa).

Cys29 contacts Zn(2+). The short motif at 31–41 (PTVYDYAHIGN) is the 'HIGH' region element. Residues Cys222, His247, and Glu251 each coordinate Zn(2+). The short motif at 279-283 (KMSKS) is the 'KMSKS' region element. Lys282 lines the ATP pocket.

It belongs to the class-I aminoacyl-tRNA synthetase family. In terms of assembly, monomer. Zn(2+) is required as a cofactor.

Its subcellular location is the cytoplasm. The enzyme catalyses tRNA(Cys) + L-cysteine + ATP = L-cysteinyl-tRNA(Cys) + AMP + diphosphate. This chain is Cysteine--tRNA ligase, found in Treponema denticola (strain ATCC 35405 / DSM 14222 / CIP 103919 / JCM 8153 / KCTC 15104).